A 368-amino-acid polypeptide reads, in one-letter code: tRNA(Met) cytidine acetate ligase (368 aa).

ATP-binding positions include 7-20 (IAEF…HKYL), glycine 96, asparagine 152, and arginine 175.

Belongs to the TmcAL family.

The protein resides in the cytoplasm. It carries out the reaction cytidine(34) in elongator tRNA(Met) + acetate + ATP = N(4)-acetylcytidine(34) in elongator tRNA(Met) + AMP + diphosphate. In terms of biological role, catalyzes the formation of N(4)-acetylcytidine (ac(4)C) at the wobble position of elongator tRNA(Met), using acetate and ATP as substrates. First activates an acetate ion to form acetyladenylate (Ac-AMP) and then transfers the acetyl group to tRNA to form ac(4)C34. This Streptococcus pyogenes serotype M1 protein is tRNA(Met) cytidine acetate ligase.